The chain runs to 676 residues: MSDQIKFIMDSLNKEPFRKNYNLITFDSLEPMQLLQVLSDVLAEIDPKQLVDIREEMPEQTAKRMLSLLGILKYKPSGNATDMSTFRQGLVIGSKPVIYPVLHWLLQRTNELKKRAYLARFLIKLEVPSEFLQDETVADTNKQYEELMEAFKTLHKEYEQLKISGFSTAEIRKDISAMEEEKDQLIKRVEHLKKRVETAQNHQWMLKIARQLRVEKEREEYLAQQKQEQKNQLFHAVQRLQRVQNQLKSMRQAAADAKPESLMKRLEEEIKFNLYMVTEKFPKELENKKKELHFLQKVVSEPAMGHSDLLELESKINEINTEINQLIEKKMMRNEPIEGKLSLYRQQASIISRKKEAKAEELQEAKEKLASLEREASVKRNQTREFDGTEVLKGDEFKRYVNKLRSKSTVFKKKHQIIAELKAEFGLLQRTEELLKQRHENIQQQLQTMEEKKGISGYSYTQEELERVSALKSEVDEMKGRTLDDMSEMVKKLYSLVSEKKSALASVIKELRQLRQKYQELTQECDEKKSQYDSCAAGLESNRSKLEQEVRRLREECLQEESRYHYTNCMIKNLEVQLRRATDEMKAYISSDQQEKRKAIREQYTKNTAEQENLGKKLREKQKVIRESHGPNMKQAKMWRDLEQLMECKKQCFLKQQSQTSIGQVIQEGGEDRLIL.

Serine 2 is modified (N-acetylserine). The segment at 2-121 (SDQIKFIMDS…LKKRAYLARF (120 aa)) is CH (calponin-homology)-like region. Threonine 61 carries the post-translational modification Phosphothreonine. Coiled coils occupy residues 132-258 (LQDE…ADAK), 306-389 (HSDL…FDGT), 416-456 (QIIA…KGIS), and 490-622 (VKKL…REKQ).

It belongs to the IFT81 family. Component of the IFT complex B, at least composed of IFT20, IFT22, IFT25, IFT27, IFT46, IFT52, TRAF3IP1/IFT54, IFT57, IFT74, IFT80, IFT81, and IFT88. Interacts with IFT74; the interaction is direct: within the IFT complex B, IFT74 and IFT81 mediate the transport of tubulin within the cilium. Interacts with tubulin; the interaction is direct. Interacts with IFT57 and IFT70B. Interacts with RABL2/RABL2A; binding is equal in the presence of GTP or GDP. Interacts with IFT88. Interacts (via the IFT74/IFT81 heterodimer) with RABL2B. Interacts with CFAP61. As to expression, highly expressed in testis, moderately in ovary, heart, liver, skeletal muscle, kidney and pancreas, low in prostate, brain, placenta and lung and not detected in spleen, thymus, small intestine and colon. Isoform CDV-1R is abundantly expressed in testis.

The protein localises to the cell projection. Its subcellular location is the cilium. The protein resides in the cytoplasm. It is found in the cytoskeleton. It localises to the cilium basal body. Component of the intraflagellar transport (IFT) complex B: together with IFT74, forms a tubulin-binding module that specifically mediates transport of tubulin within the cilium. Binds tubulin via its CH (calponin-homology)-like region. Required for ciliogenesis. Required for proper regulation of SHH signaling. Plays an important role during spermatogenesis by modulating the assembly and elongation of the sperm flagella. The sequence is that of Intraflagellar transport protein 81 homolog (IFT81) from Homo sapiens (Human).